The following is a 90-amino-acid chain: MKVSVLITLAVLGVMFVWTSAAEQEDHGSDRRDSPALLKSLGRVFQSEERACRELLGGCSKDSDCCAHLECRKKWPYHCVWDWTFGNEKS.

The signal sequence occupies residues 1 to 22; sequence MKVSVLITLAVLGVMFVWTSAA. Positions 23 to 50 are excised as a propeptide; the sequence is EQEDHGSDRRDSPALLKSLGRVFQSEER. Disulfide bonds link Cys52/Cys66, Cys59/Cys71, and Cys65/Cys79. Phe85 carries the post-translational modification Phenylalanine amide. Positions 86–90 are excised as a propeptide; the sequence is GNEKS.

The protein belongs to the neurotoxin 10 (Hwtx-1) family. 39 (Jztx-34) subfamily. As to expression, expressed by the venom gland.

Its subcellular location is the secreted. Its function is as follows. Gating-modifier toxin that inhibits voltage-gated sodium channel Nav by shifting the threshold for channel activation to more positive potentials. This toxin moderately inhibits human Nav1.7/SCN9A (IC(50)=360 nM) and weakly inhibits hNav1.2/SCN2A (37% inhibition at 1 uM peptide) and hNav1.5/SCN5A (&lt;20% inhibition at 1 uM peptide). Inhibition of Nav1.7 is voltage-dependent, with lower inhibition at more positive test pulses. This is Mu-theraphotoxin-Phlo1b from Phlogius sp. (Tarantula spider).